The sequence spans 158 residues: Ribosome maturation factor RimP (158 aa).

It belongs to the RimP family.

The protein localises to the cytoplasm. Its function is as follows. Required for maturation of 30S ribosomal subunits. The protein is Ribosome maturation factor RimP of Lactiplantibacillus plantarum (strain ATCC BAA-793 / NCIMB 8826 / WCFS1) (Lactobacillus plantarum).